The following is a 1135-amino-acid chain: Envelopment polyprotein (1135 aa).

An N-terminal signal peptide occupies residues 1–35 (MRILKLLELVVKVSLFTIALSSVLLAFLIFRATDA). The Lumenal segment spans residues 36-314 (KVEIIRGDHP…KYSKSIYKQT (279 aa)). The Cell attachment site motif lies at 41–43 (RGD). Cystine bridges form between cysteine 114-cysteine 145 and cysteine 122-cysteine 156. Residue asparagine 116 is glycosylated (N-linked (GlcNAc...) asparagine; by host). Positions 177–195 (LDKKRHFSVGGKFFISESL) are non-covalent dimerization. A glycan (N-linked (GlcNAc...) asparagine; by host) is linked at asparagine 210. A disulfide bridge links cysteine 224 with cysteine 285. A helical membrane pass occupies residues 315–366 (ACINFSWIRLILIALLIYFPIRWLVNKTTKPLFLWYDLMGLITYPVLLLINC). Over 367–484 (LWKYFPLKCS…VPGCPFLVTS (118 aa)) the chain is Cytoplasmic. The segment at 437-484 (LSLSLLKFVTEILIGLVILSQMPMSMAQTTQCLSGCFYVPGCPFLVTS) is signal for signal peptide peptidase. Residues 485–1067 (KFEKCSEKDQ…YFGSFFDTIR (583 aa)) lie on the Lumenal side of the membrane. 2 N-linked (GlcNAc...) asparagine; by host glycosylation sites follow: asparagine 605 and asparagine 980. Residues 1068-1088 (VVLLIAFIFLVTYFCSILTSI) traverse the membrane as a helical segment. At 1089-1135 (CKGYVKNESYKSRSKIEDDDEPEIKAPMLMKDTMTRRRPPMDFSHLV) the chain is on the cytoplasmic side.

This sequence belongs to the tospovirus envelope glycoprotein family. In terms of assembly, homodimer; disulfide-linked. Heterodimer with Glycoprotein C. Interacts with nucleoprotein. Heterodimer with Glycoprotein N. Interacts with nucleoprotein. Specific enzymatic cleavages in vivo yield mature proteins including Glycoprotein N and Glycoprotein C. In terms of processing, glycosylated with O-linked glycans. Glycosylation is essential for proper subcellular location. Post-translationally, cleaved at acidic pH.

The protein resides in the virion membrane. The protein localises to the host Golgi apparatus membrane. It is found in the host endoplasmic reticulum membrane. Functionally, forms the spikes present at the surface of the virion together with Glycoprotein C. They are able to attach the virion to a cell receptor and to promote fusion of membranes after endocytosis of the virion. Plays a role in virus binding and/or entry into the vector midgut. Forms the spikes present at the surface of the virion together with Glycoprotein N. They are able to attach the virion to a cell receptor and to promote fusion of membranes after endocytosis of the virion. Probable class II fusion protein. This chain is Envelopment polyprotein (GP), found in Tomato spotted wilt virus (strain Brazilian Br-01) (TSWV).